The primary structure comprises 618 residues: Mitochondrial Rho GTPase 1 (618 aa).

The Cytoplasmic portion of the chain corresponds to 1 to 592; it reads MKKDVRILLV…TQADLKSSTF (592 aa). Residues 2–168 enclose the Miro 1 domain; sequence KKDVRILLVG…FYYAQKAVLH (167 aa). Positions 14, 16, 17, 18, and 19 each coordinate GTP. Position 18 (Thr-18) interacts with Mg(2+). Positions 35 and 57 each coordinate Mg(2+). Ser-59 is a GTP binding site. Residue Lys-92 is modified to N6-acetyllysine. Positions 118, 119, 121, 149, and 150 each coordinate GTP. A Glycyl lysine isopeptide (Lys-Gly) (interchain with G-Cter in ubiquitin) cross-link involves residue Lys-153. Residues 184–219 enclose the EF-hand 1 domain; sequence ACIKALTRIFKISDQDNDGTLNDAELNFFQRICFNT. Asp-197, Asp-199, Asp-201, Thr-203, and Glu-208 together coordinate Ca(2+). Lys-235 is covalently cross-linked (Glycyl lysine isopeptide (Lys-Gly) (interchain with G-Cter in ubiquitin)). The region spanning 304–339 is the EF-hand 2 domain; that stretch reads HAYLFLQSTFDKHDLDRDCALSPDELKDLFKVFPYI. Residues Asp-317, Asp-319, Asp-321, Ala-323, and Glu-328 each coordinate Ca(2+). The Miro 2 domain occupies 416 to 579; that stretch reads RNVFRCNVIG…FVKLTTMAMY (164 aa). Residues Asn-428, Cys-429, Gly-430, Lys-431, Ser-432, Gly-433, and Lys-447 each contribute to the GTP site. Residue Asn-428 coordinates Mg(2+). Residues Asn-428, Cys-429, Gly-430, Lys-431, Ser-432, Gly-433, Lys-447, Lys-454, Ser-477, Glu-478, Lys-528, Asp-530, Thr-558, Cys-559, and Asn-560 each coordinate GDP. Lys-528, Asp-530, Thr-558, and Cys-559 together coordinate GTP. A Glycyl lysine isopeptide (Lys-Gly) (interchain with G-Cter in ubiquitin) cross-link involves residue Lys-572. The chain crosses the membrane as a helical; Anchor for type IV membrane protein span at residues 593–615; sequence WLRASFGATVFAVLGFAMYKALL. Residues 616–618 lie on the Mitochondrial intermembrane side of the membrane; sequence KQR.

This sequence belongs to the mitochondrial Rho GTPase family. In terms of assembly, homodimer. Interacts with the kinesin-binding proteins TRAK1/OIP106 and TRAK2/GRIF1, forming a link between mitochondria and the trafficking apparatus of the microtubules. Interacts with RAP1GDS1. Interacts with ARMCX1. Found in a complex with KIF5B, OGT, RHOT2 and TRAK1. In terms of processing, ubiquitinated by PRKN during mitophagy, leading to its degradation and enhancement of mitophagy. Deubiquitinated by USP30. Post-translationally, acetylation on Lys-92 decreases sensitivity of mitochondrial transport to elevated Ca(2+) levels, increases mitochondrial transport and promotes axon growth. Deacetylated by HDAC6 which blocks mitochondrial transport and mediates axon growth inhibition. As to expression, ubiquitously expressed. Expressed at high level in heart and skeletal muscle.

It is found in the mitochondrion outer membrane. It catalyses the reaction GTP + H2O = GDP + phosphate + H(+). It carries out the reaction ATP + H2O = ADP + phosphate + H(+). The catalysed reaction is UTP + H2O = UDP + phosphate + H(+). Functionally, atypical mitochondrial nucleoside-triphosphatase (NTPase) involved in mitochondrial trafficking. Probably involved in control of anterograde transport of mitochondria and their subcellular distribution. Promotes mitochondrial fission during high calcium conditions. Can hydrolyze GTP, ATP and UTP. The sequence is that of Mitochondrial Rho GTPase 1 (RHOT1) from Homo sapiens (Human).